The chain runs to 53 residues: RVLFRSGDQPADQPAERMQDISPEQNPLFHPDKRRCCPMPGCFAGPFCPCCPP.

Positions 1–34 (RVLFRSGDQPADQPAERMQDISPEQNPLFHPDKR) are excised as a propeptide. 3 cysteine pairs are disulfide-bonded: Cys-36–Cys-50, Cys-37–Cys-48, and Cys-42–Cys-51.

The protein belongs to the conotoxin M superfamily. In terms of tissue distribution, expressed by the venom duct.

The protein resides in the secreted. This chain is Reg12l, found in Conus regius (Crown cone).